Consider the following 91-residue polypeptide: MATKKSGGSSCNGRDSRGRRLGVKKFGSELVIPGNIIIRQRGTKYHPGKNVGIGRDHTIFSKIAGVVSFRRKAEGRVFVDVLPESVSASLS.

Polar residues predominate over residues Met-1–Gly-13. A disordered region spans residues Met-1–Arg-20.

Belongs to the bacterial ribosomal protein bL27 family.

This chain is Large ribosomal subunit protein bL27, found in Anaplasma phagocytophilum (strain HZ).